A 224-amino-acid chain; its full sequence is N6-methyladenosine RNA demethylase ALKBH (224 aa).

The Fe2OG dioxygenase domain maps to 93 to 222 (LAQAAIVNFY…RINLNVRQMR (130 aa)). Fe cation is bound by residues His111, Asp113, and His178. Arg213 provides a ligand contact to 2-oxoglutarate.

Belongs to the alkB family. Fe(2+) serves as cofactor.

The catalysed reaction is an N(6)-methyladenosine in mRNA + 2-oxoglutarate + O2 = an adenosine in mRNA + formaldehyde + succinate + CO2. In terms of biological role, RNA demethylase that regulates the stability of mRNAs through an m(6)A-dependent manner. M6A is a modification present at internal sites of mRNAs and some non-coding RNAs and plays a role in mRNA stability and processing. Demethylate m6A at position A1935 within the 3'UTR of transcription factor ZAP1 and plays an important role in C.parasitica development and virulence. Target mRNAs are primarily associated with amino-acid biosynthesis, 2-oxocarboxylic acid metabolism, and ABC transporters, as well as alpha-amino acid metabolism, small-molecule biosynthesis, and the sulfite reductase complex (NADPH). The sequence is that of N6-methyladenosine RNA demethylase ALKBH from Cryphonectria parasitica (strain ATCC 38755 / EP155).